A 70-amino-acid chain; its full sequence is MAVPKKRTSRSKKKIRKNVRKGKAYRAAIKAFSLAKSISTGHSKSFYCIVNDDSSGSSESKLTAIDLDDP.

Disordered regions lie at residues 1 to 20 and 51 to 70; these read MAVPKKRTSRSKKKIRKNVR and NDDSSGSSESKLTAIDLDDP. Polar residues predominate over residues 52–61; the sequence is DDSSGSSESK.

The protein belongs to the bacterial ribosomal protein bL32 family.

The protein localises to the plastid. The protein resides in the chloroplast. The polypeptide is Large ribosomal subunit protein bL32c (rpl32) (Pinus thunbergii (Japanese black pine)).